A 256-amino-acid polypeptide reads, in one-letter code: MAWSAQQYLKFEDERTRPARDLLAQVPLERVLNGYDLGCGPGNSTELLTDRYGVNVITGIDSDDDMLEKAADRLPNTNFGKADLATWKPAQKADLLYANAVFQWVPDHLAVLSQLMDQLESGGVLAVQMPDNLQEPTHIAMHETADGGPWKDAFSGGGLRRKPLPPPSDYFNALSPKSSRVDVWHTVYNHPMKDADSIVEWVKGTGLRPYLAAAGEENREAFLADYTRRIAAAYPPMADGRLLLRFPRLFVVAVKK.

Belongs to the methyltransferase superfamily. Tam family.

The protein localises to the cytoplasm. It carries out the reaction trans-aconitate + S-adenosyl-L-methionine = (E)-3-(methoxycarbonyl)pent-2-enedioate + S-adenosyl-L-homocysteine. Its function is as follows. Catalyzes the S-adenosylmethionine monomethyl esterification of trans-aconitate. In Agrobacterium fabrum (strain C58 / ATCC 33970) (Agrobacterium tumefaciens (strain C58)), this protein is Trans-aconitate 2-methyltransferase.